A 339-amino-acid polypeptide reads, in one-letter code: Cathepsin B (339 aa).

Residues 1-17 (MWQLWASLCCLLALADA) form the signal peptide. Residues 18–79 (RSRPSFHPLS…QRVMFTEDLK (62 aa)) constitute a propeptide, activation peptide. 6 cysteine pairs are disulfide-bonded: cysteine 93-cysteine 122, cysteine 105-cysteine 150, cysteine 141-cysteine 207, cysteine 142-cysteine 146, cysteine 179-cysteine 211, and cysteine 187-cysteine 198. The active site involves cysteine 108. Asparagine 192 carries N-linked (GlcNAc...) asparagine glycosylation. Lysine 220 carries the post-translational modification N6-acetyllysine. Catalysis depends on residues histidine 278 and asparagine 298. Positions 334–339 (QYWEKI) are excised as a propeptide.

It belongs to the peptidase C1 family. As to quaternary structure, dimer of a heavy chain and a light chain cross-linked by a disulfide bond. Interacts with SRPX2. Directly interacts with SHKBP1.

Its subcellular location is the lysosome. The protein localises to the melanosome. It localises to the secreted. The protein resides in the extracellular space. It is found in the apical cell membrane. It catalyses the reaction Hydrolysis of proteins with broad specificity for peptide bonds. Preferentially cleaves -Arg-Arg-|-Xaa bonds in small molecule substrates (thus differing from cathepsin L). In addition to being an endopeptidase, shows peptidyl-dipeptidase activity, liberating C-terminal dipeptides.. In terms of biological role, thiol protease which is believed to participate in intracellular degradation and turnover of proteins. Cleaves matrix extracellular phosphoglycoprotein MEPE. Involved in the solubilization of cross-linked TG/thyroglobulin in the thyroid follicle lumen. Has also been implicated in tumor invasion and metastasis. This Pongo abelii (Sumatran orangutan) protein is Cathepsin B (CTSB).